The following is a 140-amino-acid chain: MRLSWVLTVLSICLSALVTATGTEGKRKLQIGVKKRVDHCPIKSRKGDVLHMHYTGKLEDGTEFDSSLPQNQPFVFSLGTGQVIKGWDQGLLGMCEGEKRKLVIPSELGYGERGAPPKIPGGATLVFEVELLKIERRSEL.

A signal peptide spans 1–20; the sequence is MRLSWVLTVLSICLSALVTA. Residues 47–135 enclose the PPIase FKBP-type domain; that stretch reads GDVLHMHYTG…VFEVELLKIE (89 aa).

It belongs to the FKBP-type PPIase family. FKBP2 subfamily. As to quaternary structure, interacts with ARFGEF1/BIG1 and the C-terminal of EPB41L2.

It is found in the endoplasmic reticulum membrane. The enzyme catalyses [protein]-peptidylproline (omega=180) = [protein]-peptidylproline (omega=0). Inhibited by both FK506 and rapamycin. Its function is as follows. PPIases accelerate the folding of proteins. It catalyzes the cis-trans isomerization of proline imidic peptide bonds in oligopeptides. This Bos taurus (Bovine) protein is Peptidyl-prolyl cis-trans isomerase FKBP2 (FKBP2).